A 160-amino-acid polypeptide reads, in one-letter code: Putative pre-16S rRNA nuclease (160 aa).

This sequence belongs to the YqgF nuclease family.

The protein resides in the cytoplasm. Functionally, could be a nuclease involved in processing of the 5'-end of pre-16S rRNA. This is Putative pre-16S rRNA nuclease from Chelativorans sp. (strain BNC1).